The chain runs to 412 residues: ATP phosphoribosyltransferase regulatory subunit (412 aa).

The protein belongs to the class-II aminoacyl-tRNA synthetase family. HisZ subfamily. As to quaternary structure, heteromultimer composed of HisG and HisZ subunits.

The protein resides in the cytoplasm. Its pathway is amino-acid biosynthesis; L-histidine biosynthesis; L-histidine from 5-phospho-alpha-D-ribose 1-diphosphate: step 1/9. Functionally, required for the first step of histidine biosynthesis. May allow the feedback regulation of ATP phosphoribosyltransferase activity by histidine. The polypeptide is ATP phosphoribosyltransferase regulatory subunit (Dehalococcoides mccartyi (strain CBDB1)).